The sequence spans 183 residues: Ribosome rescue factor SmrB (183 aa).

Residues 98–173 (LDLHGLTQLQ…GDAALLVLIE (76 aa)) enclose the Smr domain.

Belongs to the SmrB family. Associates with collided ribosomes, but not with correctly translating polysomes.

Its function is as follows. Acts as a ribosome collision sensor. Detects stalled/collided disomes (pairs of ribosomes where the leading ribosome is stalled and a second ribosome has collided with it) and endonucleolytically cleaves mRNA at the 5' boundary of the stalled ribosome. Stalled/collided disomes form a new interface (primarily via the 30S subunits) that binds SmrB. Cleaved mRNA becomes available for tmRNA ligation, leading to ribosomal subunit dissociation and rescue of stalled ribosomes. The chain is Ribosome rescue factor SmrB from Shigella dysenteriae serotype 1 (strain Sd197).